A 155-amino-acid polypeptide reads, in one-letter code: Snaclec clone 2100755 (155 aa).

An N-terminal signal peptide occupies residues 1–23; it reads MGRFIFVSFGLLVVFLSLSGTAA. 3 disulfides stabilise this stretch: cysteine 25–cysteine 36, cysteine 53–cysteine 144, and cysteine 119–cysteine 136. The C-type lectin domain maps to 32 to 145; the sequence is YDGHCYQVFS…CEKSVSFVCK (114 aa).

The protein belongs to the snaclec family. In terms of assembly, heterodimer; disulfide-linked.

It is found in the secreted. Functionally, interferes with one step of hemostasis (modulation of platelet aggregation, or coagulation cascade, for example). The polypeptide is Snaclec clone 2100755 (Deinagkistrodon acutus (Hundred-pace snake)).